The sequence spans 105 residues: ATP synthase subunit c (105 aa).

2 helical membrane-spanning segments follow: residues 32–52 (SILG…IGMG) and 78–98 (VAMA…IIAI).

Belongs to the ATPase C chain family. In terms of assembly, F-type ATPases have 2 components, F(1) - the catalytic core - and F(0) - the membrane proton channel. F(1) has five subunits: alpha(3), beta(3), gamma(1), delta(1), epsilon(1). F(0) has three main subunits: a(1), b(2) and c(10-14). The alpha and beta chains form an alternating ring which encloses part of the gamma chain. F(1) is attached to F(0) by a central stalk formed by the gamma and epsilon chains, while a peripheral stalk is formed by the delta and b chains.

The protein localises to the cell inner membrane. Functionally, f(1)F(0) ATP synthase produces ATP from ADP in the presence of a proton or sodium gradient. F-type ATPases consist of two structural domains, F(1) containing the extramembraneous catalytic core and F(0) containing the membrane proton channel, linked together by a central stalk and a peripheral stalk. During catalysis, ATP synthesis in the catalytic domain of F(1) is coupled via a rotary mechanism of the central stalk subunits to proton translocation. Key component of the F(0) channel; it plays a direct role in translocation across the membrane. A homomeric c-ring of between 10-14 subunits forms the central stalk rotor element with the F(1) delta and epsilon subunits. This chain is ATP synthase subunit c, found in Helicobacter pylori (strain ATCC 700392 / 26695) (Campylobacter pylori).